Here is a 290-residue protein sequence, read N- to C-terminus: Glyceraldehyde-3-phosphate dehydrogenase (290 aa).

NAD(+) is bound by residues aspartate 13 and arginine 58. D-glyceraldehyde 3-phosphate is bound by residues 129 to 131 (SCT), threonine 160, 189 to 190 (TG), and arginine 212. The active-site Nucleophile is the cysteine 130.

This sequence belongs to the glyceraldehyde-3-phosphate dehydrogenase family. In terms of assembly, homotetramer.

It localises to the cytoplasm. It carries out the reaction D-glyceraldehyde 3-phosphate + phosphate + NAD(+) = (2R)-3-phospho-glyceroyl phosphate + NADH + H(+). It participates in carbohydrate degradation; glycolysis; pyruvate from D-glyceraldehyde 3-phosphate: step 1/5. This is Glyceraldehyde-3-phosphate dehydrogenase (GPD) from Lactarius deterrimus (False saffron milkcap).